The sequence spans 426 residues: Ornithine aminotransferase (426 aa).

Lys-291 is subject to N6-(pyridoxal phosphate)lysine.

The protein belongs to the class-III pyridoxal-phosphate-dependent aminotransferase family. Pyridoxal 5'-phosphate serves as cofactor.

The enzyme catalyses a 2-oxocarboxylate + L-ornithine = L-glutamate 5-semialdehyde + an L-alpha-amino acid. It participates in amino-acid biosynthesis; L-proline biosynthesis; L-glutamate 5-semialdehyde from L-ornithine: step 1/1. The protein is Ornithine aminotransferase of Vigna aconitifolia (Moth bean).